We begin with the raw amino-acid sequence, 334 residues long: Holliday junction branch migration complex subunit RuvB (334 aa).

The large ATPase domain (RuvB-L) stretch occupies residues 4–186 (ADRLIAPENP…FGITQRLEYY (183 aa)). Residues Ile25, Arg26, Gly67, Lys70, Thr71, Thr72, 133–135 (EDY), Arg176, Tyr186, and Arg223 each bind ATP. Thr71 contributes to the Mg(2+) binding site. Residues 187–257 (KVQDLQNIVQ…VADKALNMLD (71 aa)) form a small ATPAse domain (RuvB-S) region. Positions 260–334 (AQGFDYMDRK…RAYLHFGIEK (75 aa)) are head domain (RuvB-H). DNA is bound by residues Arg315 and Arg320.

The protein belongs to the RuvB family. In terms of assembly, homohexamer. Forms an RuvA(8)-RuvB(12)-Holliday junction (HJ) complex. HJ DNA is sandwiched between 2 RuvA tetramers; dsDNA enters through RuvA and exits via RuvB. An RuvB hexamer assembles on each DNA strand where it exits the tetramer. Each RuvB hexamer is contacted by two RuvA subunits (via domain III) on 2 adjacent RuvB subunits; this complex drives branch migration. In the full resolvosome a probable DNA-RuvA(4)-RuvB(12)-RuvC(2) complex forms which resolves the HJ.

Its subcellular location is the cytoplasm. The enzyme catalyses ATP + H2O = ADP + phosphate + H(+). Its function is as follows. The RuvA-RuvB-RuvC complex processes Holliday junction (HJ) DNA during genetic recombination and DNA repair, while the RuvA-RuvB complex plays an important role in the rescue of blocked DNA replication forks via replication fork reversal (RFR). RuvA specifically binds to HJ cruciform DNA, conferring on it an open structure. The RuvB hexamer acts as an ATP-dependent pump, pulling dsDNA into and through the RuvAB complex. RuvB forms 2 homohexamers on either side of HJ DNA bound by 1 or 2 RuvA tetramers; 4 subunits per hexamer contact DNA at a time. Coordinated motions by a converter formed by DNA-disengaged RuvB subunits stimulates ATP hydrolysis and nucleotide exchange. Immobilization of the converter enables RuvB to convert the ATP-contained energy into a lever motion, pulling 2 nucleotides of DNA out of the RuvA tetramer per ATP hydrolyzed, thus driving DNA branch migration. The RuvB motors rotate together with the DNA substrate, which together with the progressing nucleotide cycle form the mechanistic basis for DNA recombination by continuous HJ branch migration. Branch migration allows RuvC to scan DNA until it finds its consensus sequence, where it cleaves and resolves cruciform DNA. The chain is Holliday junction branch migration complex subunit RuvB from Vibrio parahaemolyticus serotype O3:K6 (strain RIMD 2210633).